The chain runs to 490 residues: Betaine aldehyde dehydrogenase (490 aa).

A K(+)-binding site is contributed by Asp-93. An NAD(+)-binding site is contributed by 150 to 152 (GAW). Lys-162 serves as the catalytic Charge relay system. 176–179 (KPSE) is an NAD(+) binding site. Val-180 contacts K(+). An NAD(+)-binding site is contributed by 230–233 (GVKT). Leu-246 provides a ligand contact to K(+). Glu-252 acts as the Proton acceptor in catalysis. Residues Gly-254, Cys-286, and Glu-387 each coordinate NAD(+). Cys-286 (nucleophile) is an active-site residue. Cys-286 carries the cysteine sulfenic acid (-SOH) modification. K(+)-binding residues include Lys-457 and Gly-460. The Charge relay system role is filled by Glu-464.

This sequence belongs to the aldehyde dehydrogenase family. Dimer of dimers. K(+) serves as cofactor.

It catalyses the reaction betaine aldehyde + NAD(+) + H2O = glycine betaine + NADH + 2 H(+). It functions in the pathway amine and polyamine biosynthesis; betaine biosynthesis via choline pathway; betaine from betaine aldehyde: step 1/1. Functionally, involved in the biosynthesis of the osmoprotectant glycine betaine. Catalyzes the irreversible oxidation of betaine aldehyde to the corresponding acid. This Serratia proteamaculans (strain 568) protein is Betaine aldehyde dehydrogenase.